We begin with the raw amino-acid sequence, 23 residues long: NLMQFETLIMKVAGRSGVWYYGS.

It depends on Ca(2+) as a cofactor. Post-translationally, contains 7 disulfide bonds. In terms of tissue distribution, expressed by the venom gland.

Its subcellular location is the secreted. It catalyses the reaction a 1,2-diacyl-sn-glycero-3-phosphocholine + H2O = a 1-acyl-sn-glycero-3-phosphocholine + a fatty acid + H(+). Its function is as follows. Snake venom phospholipase A2 (PLA2) that shows a moderate inhibition of ADP-induced human platelet aggregation when tested on platelet rich plasma. Exhibits high hydrolytic activities and prefers the anionic micelles (dPPC with deoxycholate) to the zwitterionic micelles (dPPC with Triton X-100). PLA2 catalyzes the calcium-dependent hydrolysis of the 2-acyl groups in 3-sn-phosphoglycerides. This is Acidic phospholipase A2 Ts-A5 from Trimeresurus stejnegeri (Chinese green tree viper).